Consider the following 134-residue polypeptide: ATP synthase epsilon chain (134 aa).

It belongs to the ATPase epsilon chain family. F-type ATPases have 2 components, CF(1) - the catalytic core - and CF(0) - the membrane proton channel. CF(1) has five subunits: alpha(3), beta(3), gamma(1), delta(1), epsilon(1). CF(0) has three main subunits: a, b and c.

It localises to the cell membrane. Functionally, produces ATP from ADP in the presence of a proton gradient across the membrane. In Clostridium botulinum (strain Alaska E43 / Type E3), this protein is ATP synthase epsilon chain.